A 209-amino-acid chain; its full sequence is Large ribosomal subunit protein uL3 (209 aa).

Residues 127-166 (NFGGGQRTHGQSDRLRAPGSIGGASDPSKTFKGTKMGGRM) are disordered.

Belongs to the universal ribosomal protein uL3 family. Part of the 50S ribosomal subunit. Forms a cluster with proteins L14 and L19.

Functionally, one of the primary rRNA binding proteins, it binds directly near the 3'-end of the 23S rRNA, where it nucleates assembly of the 50S subunit. In Chlorobium phaeovibrioides (strain DSM 265 / 1930) (Prosthecochloris vibrioformis (strain DSM 265)), this protein is Large ribosomal subunit protein uL3.